Here is an 85-residue protein sequence, read N- to C-terminus: Large ribosomal subunit protein bL27 (85 aa).

Residues M1–L21 are disordered. The span at S9 to Q19 shows a compositional bias: polar residues.

It belongs to the bacterial ribosomal protein bL27 family.

This chain is Large ribosomal subunit protein bL27, found in Pectobacterium carotovorum subsp. carotovorum (strain PC1).